A 267-amino-acid chain; its full sequence is Phosphate import ATP-binding protein PstB 2 (267 aa).

Residues 21–262 (LSTKDVHVYY…AKLQSTNDYV (242 aa)) enclose the ABC transporter domain. 53–60 (GPSGSGKS) serves as a coordination point for ATP.

This sequence belongs to the ABC transporter superfamily. Phosphate importer (TC 3.A.1.7) family. As to quaternary structure, the complex is composed of two ATP-binding proteins (PstB), two transmembrane proteins (PstC and PstA) and a solute-binding protein (PstS).

The protein localises to the cell membrane. The enzyme catalyses phosphate(out) + ATP + H2O = ADP + 2 phosphate(in) + H(+). In terms of biological role, part of the ABC transporter complex PstSACB involved in phosphate import. Responsible for energy coupling to the transport system. This Streptococcus pneumoniae serotype 4 (strain ATCC BAA-334 / TIGR4) protein is Phosphate import ATP-binding protein PstB 2.